A 241-amino-acid chain; its full sequence is 3-oxoacyl-[acyl-carrier-protein] reductase FabG (241 aa).

NADP(+) contacts are provided by residues 13 to 16, S38, 57 to 58, and N83; these read GASG and EI. S135 is a substrate binding site. The active-site Proton acceptor is the Y148. NADP(+) contacts are provided by residues 148–152 and I181; that span reads YCASK.

The protein belongs to the short-chain dehydrogenases/reductases (SDR) family. In terms of assembly, homotetramer.

The enzyme catalyses a (3R)-hydroxyacyl-[ACP] + NADP(+) = a 3-oxoacyl-[ACP] + NADPH + H(+). The protein operates within lipid metabolism; fatty acid biosynthesis. Its function is as follows. Catalyzes the NADPH-dependent reduction of beta-ketoacyl-ACP substrates to beta-hydroxyacyl-ACP products, the first reductive step in the elongation cycle of fatty acid biosynthesis. The chain is 3-oxoacyl-[acyl-carrier-protein] reductase FabG (fabG) from Rickettsia felis (strain ATCC VR-1525 / URRWXCal2) (Rickettsia azadi).